We begin with the raw amino-acid sequence, 288 residues long: Probable ketoamine kinase VP1481 (288 aa).

Residue 92–94 (NYL) coordinates ATP. Aspartate 195 serves as the catalytic Proton acceptor.

This sequence belongs to the fructosamine kinase family.

Its function is as follows. Ketoamine kinase that phosphorylates ketoamines on the third carbon of the sugar moiety to generate ketoamine 3-phosphate. The sequence is that of Probable ketoamine kinase VP1481 from Vibrio parahaemolyticus serotype O3:K6 (strain RIMD 2210633).